A 263-amino-acid chain; its full sequence is Endonuclease 8 (263 aa).

P2 functions as the Schiff-base intermediate with DNA in the catalytic mechanism. E3 serves as the catalytic Proton donor. Catalysis depends on K53, which acts as the Proton donor; for beta-elimination activity. DNA is bound by residues Q70, R125, and N169. An FPG-type zinc finger spans residues 229–263 (KVFHRDGEACERCGGIIEKTTLSSRPFYWCPHCQK). Residue R253 is the Proton donor; for delta-elimination activity of the active site.

It belongs to the FPG family. Requires Zn(2+) as cofactor.

The catalysed reaction is 2'-deoxyribonucleotide-(2'-deoxyribose 5'-phosphate)-2'-deoxyribonucleotide-DNA = a 3'-end 2'-deoxyribonucleotide-(2,3-dehydro-2,3-deoxyribose 5'-phosphate)-DNA + a 5'-end 5'-phospho-2'-deoxyribonucleoside-DNA + H(+). In terms of biological role, involved in base excision repair of DNA damaged by oxidation or by mutagenic agents. Acts as a DNA glycosylase that recognizes and removes damaged bases. Has a preference for oxidized pyrimidines, such as thymine glycol, 5,6-dihydrouracil and 5,6-dihydrothymine. Has AP (apurinic/apyrimidinic) lyase activity and introduces nicks in the DNA strand. Cleaves the DNA backbone by beta-delta elimination to generate a single-strand break at the site of the removed base with both 3'- and 5'-phosphates. In Salmonella dublin (strain CT_02021853), this protein is Endonuclease 8.